The following is a 74-amino-acid chain: U-scoloptoxin(09)-Sm3a (74 aa).

Residues 1 to 22 form the signal peptide; it reads MNANSIFLCFFIMLIGCTLTHS.

The protein belongs to the scoloptoxin-09 family. Post-translationally, contains 3 disulfide bonds. Expressed by the venom gland.

Its subcellular location is the secreted. The sequence is that of U-scoloptoxin(09)-Sm3a from Scolopendra morsitans (Tanzanian blue ringleg centipede).